Here is a 301-residue protein sequence, read N- to C-terminus: Protein FdhE homolog (301 aa).

Belongs to the FdhE family.

It localises to the cytoplasm. Necessary for formate dehydrogenase activity. The polypeptide is Protein FdhE homolog (Shewanella baltica (strain OS195)).